A 117-amino-acid chain; its full sequence is Ribonuclease P protein component (117 aa).

The protein belongs to the RnpA family. In terms of assembly, consists of a catalytic RNA component (M1 or rnpB) and a protein subunit.

The enzyme catalyses Endonucleolytic cleavage of RNA, removing 5'-extranucleotides from tRNA precursor.. Its function is as follows. RNaseP catalyzes the removal of the 5'-leader sequence from pre-tRNA to produce the mature 5'-terminus. It can also cleave other RNA substrates such as 4.5S RNA. The protein component plays an auxiliary but essential role in vivo by binding to the 5'-leader sequence and broadening the substrate specificity of the ribozyme. In Staphylococcus aureus (strain MW2), this protein is Ribonuclease P protein component.